The primary structure comprises 203 residues: Glycerol-3-phosphate acyltransferase (203 aa).

4 consecutive transmembrane segments (helical) span residues 6–26, 82–102, 118–138, and 141–161; these read LTLL…AVLV, AISL…PVFF, APIG…LVLI, and YSSL…WWLD.

Belongs to the PlsY family. As to quaternary structure, probably interacts with PlsX.

It is found in the cell inner membrane. It catalyses the reaction an acyl phosphate + sn-glycerol 3-phosphate = a 1-acyl-sn-glycero-3-phosphate + phosphate. It functions in the pathway lipid metabolism; phospholipid metabolism. Its function is as follows. Catalyzes the transfer of an acyl group from acyl-phosphate (acyl-PO(4)) to glycerol-3-phosphate (G3P) to form lysophosphatidic acid (LPA). This enzyme utilizes acyl-phosphate as fatty acyl donor, but not acyl-CoA or acyl-ACP. The sequence is that of Glycerol-3-phosphate acyltransferase from Shewanella oneidensis (strain ATCC 700550 / JCM 31522 / CIP 106686 / LMG 19005 / NCIMB 14063 / MR-1).